We begin with the raw amino-acid sequence, 1107 residues long: Dynein axonemal assembly factor 1 homolog (1107 aa).

LRR repeat units follow at residues 34-56, 57-78, 79-100, 101-122, 125-146, and 150-171; these read HLNDILYLNYSGYNAIESLEEYV, GLKCLWLECNAISEIKGLEYQT, ELKCLYLQNNLITKIENLDSCK, QLDTLNLSHNHITRIENCGHDI, VLNTLNLSHNYLKTADNLDHLR, and FVSVLDLSHNRIEDIAIVKILG. The LRRCT domain maps to 184 to 223; the sequence is NPVVNEIPSYRKTLILECKNLTYLDTRPVFDRDRACAEAW. Disordered stretches follow at residues 258-281, 428-487, 500-608, 780-810, 834-855, and 1070-1107; these read HRGDGEPELLKTSSDEEDEDKASK, NESP…TLNV, ESKD…LEKE, KEEPKAPETPSIESEEEIPEELEVHSSEHEQ, SSEDLKSNFDDSSESSDSAEED, and AAHAGEVMQDTEDVESKPVEIDGTKEETVDSELADNCD. Residues 428–437 show a composition bias toward polar residues; sequence NESPLTSPSF. Acidic residues predominate over residues 446-459; sequence EEIEPTDVEEEQQI. Positions 500–512 are enriched in basic and acidic residues; it reads ESKDGELISKVES. Positions 531–544 are enriched in acidic residues; sequence DNSESEPTDITNED. Low complexity predominate over residues 549 to 560; the sequence is SSSVSVTSSTDS. Polar residues predominate over residues 581 to 597; sequence NYRQDSTTSTDSENEVS. Residues 801 to 810 show a composition bias toward basic and acidic residues; it reads LEVHSSEHEQ. Residues 844–855 are compositionally biased toward acidic residues; it reads DSSESSDSAEED. Residues 1083–1097 show a composition bias toward basic and acidic residues; the sequence is VESKPVEIDGTKEET. Acidic residues predominate over residues 1098 to 1107; it reads VDSELADNCD.

This sequence belongs to the DNAAF1 family.

Its subcellular location is the cell projection. The protein resides in the cilium. Cilium-specific protein required for cilia structures. This Aedes aegypti (Yellowfever mosquito) protein is Dynein axonemal assembly factor 1 homolog.